The sequence spans 65 residues: Large ribosomal subunit protein uL29 (65 aa).

The protein belongs to the universal ribosomal protein uL29 family.

This chain is Large ribosomal subunit protein uL29, found in Lactobacillus delbrueckii subsp. bulgaricus (strain ATCC 11842 / DSM 20081 / BCRC 10696 / JCM 1002 / NBRC 13953 / NCIMB 11778 / NCTC 12712 / WDCM 00102 / Lb 14).